Consider the following 448-residue polypeptide: MAAQASEKLEKLDLNGQNGESAAGPAKAGQADAGEVEDESDDDADDAGAAADGAANGAAKKKKKRKSKKKKKGGAKVQSSPPRVPVSSLFANGQYPEGEIVEYKNENSYRTTNEEKRYLDRMNNDFLQEYRQGAEVHRQVRQYAQKNIKPGQTLTEIAEGIEDSVRALTGHQGLEEGDNIKGGMGFPCGLSINHCAAHYTPNAGNKMVLQQGDVMKVDFGAHINGRIVDSAFTMSFDPVYDPLLEAVKDATNTGIRSLQEAGIDVRMSDIGAAIQETMESYEIELNGTTYPIKPIRNLNGHNIDQHVIHGGKSVPIVKGSDQTKMEEGEVFAIETFGSTGKGYVREDMETSHYALVANAPQVPLRLSSAKSLLNVINKNFGTLPWCRRYLDRLGQDKYLLGLNNLVQSGIVQDYPPLCDIKGSYTAQFEHTIVLRPTVKEVISRGDDY.

The interval 1-90 (MAAQASEKLE…PPRVPVSSLF (90 aa)) is disordered. Low complexity predominate over residues 22 to 33 (AAGPAKAGQADA). The segment covering 34-46 (GEVEDESDDDADD) has biased composition (acidic residues). The span at 47-58 (AGAAADGAANGA) shows a compositional bias: low complexity. Positions 59 to 74 (AKKKKKRKSKKKKKGG) are enriched in basic residues. A compositionally biased stretch (low complexity) spans 75 to 88 (AKVQSSPPRVPVSS). H198 is a substrate binding site. Residues D218, D229, and H301 each coordinate a divalent metal cation. Residue H309 coordinates substrate. Residues E334 and E429 each coordinate a divalent metal cation.

This sequence belongs to the peptidase M24A family. Methionine aminopeptidase eukaryotic type 2 subfamily. The cofactor is Co(2+). It depends on Zn(2+) as a cofactor. Mn(2+) serves as cofactor. Requires Fe(2+) as cofactor.

It localises to the cytoplasm. The catalysed reaction is Release of N-terminal amino acids, preferentially methionine, from peptides and arylamides.. Cotranslationally removes the N-terminal methionine from nascent proteins. The N-terminal methionine is often cleaved when the second residue in the primary sequence is small and uncharged (Met-Ala-, Cys, Gly, Pro, Ser, Thr, or Val). This chain is Methionine aminopeptidase 2-1, found in Emericella nidulans (strain FGSC A4 / ATCC 38163 / CBS 112.46 / NRRL 194 / M139) (Aspergillus nidulans).